Here is a 38-residue protein sequence, read N- to C-terminus: Cytochrome b6-f complex subunit 5 (38 aa).

A helical membrane pass occupies residues 5-25 (LLLGIVLGLIPITLAGLFVAA).

The protein belongs to the PetG family. The 4 large subunits of the cytochrome b6-f complex are cytochrome b6, subunit IV (17 kDa polypeptide, PetD), cytochrome f and the Rieske protein, while the 4 small subunits are PetG, PetL, PetM and PetN. The complex functions as a dimer.

It localises to the cellular thylakoid membrane. Its function is as follows. Component of the cytochrome b6-f complex, which mediates electron transfer between photosystem II (PSII) and photosystem I (PSI), cyclic electron flow around PSI, and state transitions. PetG is required for either the stability or assembly of the cytochrome b6-f complex. The protein is Cytochrome b6-f complex subunit 5 of Crocosphaera subtropica (strain ATCC 51142 / BH68) (Cyanothece sp. (strain ATCC 51142)).